We begin with the raw amino-acid sequence, 691 residues long: F-box/LRR-repeat protein 5 (691 aa).

A hemerythrin-like region spans residues 1 to 159 (MAPFPEEVDV…IKKKVIAQHC (159 aa)). Residues His-15, His-57, Glu-58, Glu-61, His-80, His-126, and Glu-130 each coordinate Fe(3+). An F-box domain is found at 202–248 (STGITHLPPEVMLSIFSYLNPQELCRCSQVSMKWSQLTKTGSLWKHL). LRR repeat units lie at residues 340–364 (SSAV…LDLT), 365–392 (QTDI…DLSG), 393–418 (CEKI…QSGF), 479–508 (LWML…CVVE), 576–607 (TRLP…SLSG), 608–635 (CYQI…NLSG), and 636–661 (CLTI…YFYY). Residues Cys-662, Cys-676, Cys-686, and Cys-687 each contribute to the [2Fe-2S] cluster site.

In terms of assembly, part of a SCF (SKP1-cullin-F-box) protein ligase complex. Interacts with ACO1/IRP1, IREB2/IRP2; the interaction depends on the [2Fe-2S] cluster. Interacts with DCTN1/p150-glued. Requires [2Fe-2S] cluster as cofactor. Polybiquitinated upon iron and oxygen depletion, leading to its degradation by the proteasome. Ubiquitination is regulated by the hemerythrin-like region that acts as an oxygen and iron sensor. Undergoes constitutive ubiquitin-dependent degradation at the steady state by HERC2.

The protein resides in the cytoplasm. It is found in the perinuclear region. Its subcellular location is the nucleus. The protein operates within protein modification; protein ubiquitination. An iron-sulfur cluster promotes IRP2 polyubiquitination and degradation in response to both iron and oxygen concentrations. Its function is as follows. Component of some SCF (SKP1-cullin-F-box) protein ligase complex that plays a central role in iron homeostasis by promoting the ubiquitination and subsequent degradation of IREB2/IRP2. The C-terminal domain of FBXL5 contains a redox-sensitive [2Fe-2S] cluster that, upon oxidation, promotes binding to IRP2 to effect its oxygen-dependent degradation. Under iron deficiency conditions, the N-terminal hemerythrin-like (Hr) region, which contains a diiron metal center, cannot bind iron and undergoes conformational changes that destabilize the FBXL5 protein and cause its ubiquitination and degradation. When intracellular iron levels start rising, the Hr region is stabilized. Additional increases in iron levels facilitate the assembly and incorporation of a redox active [2Fe-2S] cluster in the C-terminal domain. Only when oxygen level is high enough to maintain the cluster in its oxidized state can FBXL5 recruit IRP2 as a substrate for polyubiquination and degradation. Promotes ubiquitination and subsequent degradation of the dynactin complex component DCTN1. Within the nucleus, promotes the ubiquitination of SNAI1; preventing its interaction with DNA and promoting its degradation. Negatively regulates DNA damage response by mediating the ubiquitin-proteasome degradation of the DNA repair protein NABP2. The sequence is that of F-box/LRR-repeat protein 5 (FBXL5) from Pongo abelii (Sumatran orangutan).